Reading from the N-terminus, the 366-residue chain is DNA repair protein RAD51 homolog 3 (366 aa).

Positions 1-117 are required for Holliday junction resolution activity; that stretch reads MQRELVSFPL…LMKTTEVCGV (117 aa). Ser-11 is subject to Phosphoserine. The segment at 70-127 is interaction with RAD51B, RAD51D and XRCC3; it reads SVAGKKYTALELLEQEHTQGFIITFCSALDNILGGGIPLMKTTEVCGVPGVGKTQLCM. Position 116-123 (116-123) interacts with ATP; that stretch reads GVPGVGKT. The disordered stretch occupies residues 338-366; the sequence is RDAAVTASSSQTEGSSNLRKRSREPEEGC. Residues 343-354 show a composition bias toward polar residues; the sequence is TASSSQTEGSSN. Residues 356–360 carry the Nuclear localization signal motif; sequence RKRSR.

It belongs to the RecA family. RAD51 subfamily. As to quaternary structure, part of the RAD51 paralog protein complexes BCDX2 and CX3; the complexes have a ring-like structure arranged into a flat disc around a central channel. The BCDX2 complex consits of RAD51B, RAD51C, RAD51D and XRCC2; the CX3 complex consists of RAD51C and XRCC3. The BCDX2 subcomplex RAD51B:RAD51C interacts with RAD51. Interacts with SWSAP1; involved in homologous recombination repair. Interacts directly with PALB2 which may serve as a scaffold for a HR complex containing PALB2, BRCA2, RAD51C, RAD51 and XRCC3. Interacts with HELQ.

The protein resides in the nucleus. It is found in the cytoplasm. Its subcellular location is the perinuclear region. The protein localises to the mitochondrion. In terms of biological role, essential for the homologous recombination (HR) pathway of DNA repair. Involved in the homologous recombination repair (HRR) pathway of double-stranded DNA breaks arising during DNA replication or induced by DNA-damaging agents. Part of the RAD51 paralog protein complexes BCDX2 and CX3 which act at different stages of the BRCA1-BRCA2-dependent HR pathway. Upon DNA damage, BCDX2 seems to act downstream of BRCA2 recruitment and upstream of RAD51 recruitment; CX3 seems to act downstream of RAD51 recruitment; both complexes bind predominantly to the intersection of the four duplex arms of the Holliday junction (HJ) and to junction of replication forks. The BCDX2 complex was originally reported to bind single-stranded DNA, single-stranded gaps in duplex DNA and specifically to nicks in duplex DNA. The BCDX2 subcomplex RAD51B:RAD51C exhibits single-stranded DNA-dependent ATPase activity suggesting an involvement in early stages of the HR pathway. Involved in RAD51 foci formation in response to DNA damage suggesting an involvement in early stages of HR probably in the invasion step. Has an early function in DNA repair in facilitating phosphorylation of the checkpoint kinase CHEK2 and thereby transduction of the damage signal, leading to cell cycle arrest and HR activation. Participates in branch migration and HJ resolution and thus is important for processing HR intermediates late in the DNA repair process; the function may be linked to the CX3 complex. Part of a PALB2-scaffolded HR complex containing BRCA2 and which is thought to play a role in DNA repair by HR. Protects RAD51 from ubiquitin-mediated degradation that is enhanced following DNA damage. Plays a role in regulating mitochondrial DNA copy number under conditions of oxidative stress in the presence of RAD51 and XRCC3. Contributes to DNA cross-link resistance, sister chromatid cohesion and genomic stability. Involved in maintaining centrosome number in mitosis. In Cricetulus griseus (Chinese hamster), this protein is DNA repair protein RAD51 homolog 3 (RAD51C).